A 560-amino-acid chain; its full sequence is DNA ligase B (560 aa).

The active-site N6-AMP-lysine intermediate is K124.

It belongs to the NAD-dependent DNA ligase family. LigB subfamily.

The enzyme catalyses NAD(+) + (deoxyribonucleotide)n-3'-hydroxyl + 5'-phospho-(deoxyribonucleotide)m = (deoxyribonucleotide)n+m + AMP + beta-nicotinamide D-nucleotide.. Functionally, catalyzes the formation of phosphodiester linkages between 5'-phosphoryl and 3'-hydroxyl groups in double-stranded DNA using NAD as a coenzyme and as the energy source for the reaction. This chain is DNA ligase B, found in Escherichia coli O81 (strain ED1a).